Reading from the N-terminus, the 310-residue chain is Iron ABC transporter substrate-binding lipoprotein MtsA (310 aa).

Residues 1-20 (MGKRMSLILGAFLSVFLLVA) form the signal peptide. A lipid anchor (N-palmitoyl cysteine) is attached at cysteine 21. Residue cysteine 21 is the site of S-diacylglycerol cysteine attachment. Residues histidine 68, histidine 140, glutamate 206, and aspartate 281 each contribute to the Fe(2+) site.

It belongs to the bacterial solute-binding protein 9 family. Lipoprotein receptor antigen (Lrai) subfamily.

The protein resides in the cell membrane. In terms of biological role, part of the ATP-binding cassette (ABC) transport system MtsABC involved in iron import. Binds iron with high affinity and specificity and delivers it to the membrane permease for translocation into the cytoplasm. Has low affinity for Zn(2+) and Cu(2+). The protein is Iron ABC transporter substrate-binding lipoprotein MtsA (mtsA) of Streptococcus pyogenes serotype M1.